Consider the following 379-residue polypeptide: Flagellin A (379 aa).

Coiled-coil stretches lie at residues 103-128 (TNSA…RIAE) and 302-341 (YVDS…IKDT).

Belongs to the bacterial flagellin family. In terms of assembly, heteromer of multiple flagellin subunits including FlaA, FlaB, FlaC, FlaD and possibly FlaE.

It is found in the secreted. The protein resides in the bacterial flagellum. Functionally, flagellin is the subunit protein which polymerizes to form the filaments of bacterial flagella. FlaA is essential for flagellar synthesis and full motility. Important for virulence at two different levels: is needed for crossing the fish integument and may play a role once the bacterium has entered the host. The protein is Flagellin A (flaA) of Vibrio anguillarum (Listonella anguillarum).